The chain runs to 770 residues: Glutamate carboxypeptidase 2 homolog (770 aa).

Over 1-25 the chain is Cytoplasmic; it reads MPYVGVGAQTVSTSLTGAPMVKAYI. Residues 26-42 traverse the membrane as a helical; Signal-anchor for type II membrane protein segment; the sequence is AIAASLIFVFCIAALGV. Over 43-770 the chain is Extracellular; sequence HHSERKFNKF…CVVNTLRDVI (728 aa). Asn175 and Asn337 each carry an N-linked (GlcNAc...) asparagine glycan. Residues 282–597 are catalytic; that stretch reads SKKELFKGRT…QYWAELAKTF (316 aa). Zn(2+) is bound by residues His387 and Asp397. N-linked (GlcNAc...) asparagine glycosylation occurs at Asn417. The active-site Nucleophile is Glu435. Zn(2+) contacts are provided by Glu436 and Asp464. N-linked (GlcNAc...) asparagine glycans are attached at residues Asn469, Asn546, and Asn551. His562 serves as a coordination point for Zn(2+). 3 N-linked (GlcNAc...) asparagine glycosylation sites follow: Asn579, Asn606, and Asn630.

This sequence belongs to the peptidase M28 family. M28B subfamily. It depends on Zn(2+) as a cofactor.

Its subcellular location is the membrane. The catalysed reaction is Release of an unsubstituted, C-terminal glutamyl residue, typically from Ac-Asp-Glu or folylpoly-gamma-glutamates.. In Caenorhabditis elegans, this protein is Glutamate carboxypeptidase 2 homolog.